A 118-amino-acid chain; its full sequence is Ribosomal silencing factor RsfS (118 aa).

It belongs to the Iojap/RsfS family. As to quaternary structure, interacts with ribosomal protein uL14 (rplN).

The protein resides in the cytoplasm. Functions as a ribosomal silencing factor. Interacts with ribosomal protein uL14 (rplN), blocking formation of intersubunit bridge B8. Prevents association of the 30S and 50S ribosomal subunits and the formation of functional ribosomes, thus repressing translation. The chain is Ribosomal silencing factor RsfS from Bacillus subtilis (strain 168).